The sequence spans 274 residues: Large ribosomal subunit protein uL2 (274 aa).

2 disordered regions span residues 1–23 (MAIK…SFEE) and 222–242 (GSAM…SPIG).

The protein belongs to the universal ribosomal protein uL2 family. As to quaternary structure, part of the 50S ribosomal subunit. Forms a bridge to the 30S subunit in the 70S ribosome.

Its function is as follows. One of the primary rRNA binding proteins. Required for association of the 30S and 50S subunits to form the 70S ribosome, for tRNA binding and peptide bond formation. It has been suggested to have peptidyltransferase activity; this is somewhat controversial. Makes several contacts with the 16S rRNA in the 70S ribosome. This Dehalococcoides mccartyi (strain ATCC BAA-2266 / KCTC 15142 / 195) (Dehalococcoides ethenogenes (strain 195)) protein is Large ribosomal subunit protein uL2.